We begin with the raw amino-acid sequence, 132 residues long: Large ribosomal subunit protein eL28 (132 aa).

This sequence belongs to the eukaryotic ribosomal protein eL28 family.

The protein is Large ribosomal subunit protein eL28 (rpl28) of Dictyostelium discoideum (Social amoeba).